Here is a 579-residue protein sequence, read N- to C-terminus: Proline--tRNA ligase (579 aa).

It belongs to the class-II aminoacyl-tRNA synthetase family. ProS type 1 subfamily. Homodimer.

The protein localises to the cytoplasm. It catalyses the reaction tRNA(Pro) + L-proline + ATP = L-prolyl-tRNA(Pro) + AMP + diphosphate. Its function is as follows. Catalyzes the attachment of proline to tRNA(Pro) in a two-step reaction: proline is first activated by ATP to form Pro-AMP and then transferred to the acceptor end of tRNA(Pro). As ProRS can inadvertently accommodate and process non-cognate amino acids such as alanine and cysteine, to avoid such errors it has two additional distinct editing activities against alanine. One activity is designated as 'pretransfer' editing and involves the tRNA(Pro)-independent hydrolysis of activated Ala-AMP. The other activity is designated 'posttransfer' editing and involves deacylation of mischarged Ala-tRNA(Pro). The misacylated Cys-tRNA(Pro) is not edited by ProRS. The sequence is that of Proline--tRNA ligase from Chlamydia muridarum (strain MoPn / Nigg).